A 274-amino-acid polypeptide reads, in one-letter code: Beta-lactamase OXA-9 (274 aa).

An N-terminal signal peptide occupies residues 1-24 (MKKILLLHMLVFVSATLPISSVAS). Catalysis depends on serine 58, which acts as the Acyl-ester intermediate. Lysine 61 carries the N6-carboxylysine modification. 206 to 208 (KSG) lines the substrate pocket.

The protein belongs to the class-D beta-lactamase family.

It carries out the reaction a beta-lactam + H2O = a substituted beta-amino acid. In terms of biological role, oxacillin-hydrolyzing beta-lactamase. Confers resistance to beta-lactam antibiotics but at a significantly lower level than the TEM bla gene product. The sequence is that of Beta-lactamase OXA-9 (bla) from Klebsiella aerogenes (Enterobacter aerogenes).